A 154-amino-acid polypeptide reads, in one-letter code: Myoglobin (154 aa).

Residues glycine 2 to lysine 148 enclose the Globin domain. A Phosphoserine modification is found at serine 4. A nitrite-binding site is contributed by histidine 65. Histidine 65 contributes to the O2 binding site. A Phosphothreonine modification is found at threonine 68. Histidine 94 serves as a coordination point for heme b.

The protein belongs to the globin family. As to quaternary structure, monomeric.

It localises to the cytoplasm. The protein resides in the sarcoplasm. It catalyses the reaction Fe(III)-heme b-[protein] + nitric oxide + H2O = Fe(II)-heme b-[protein] + nitrite + 2 H(+). It carries out the reaction H2O2 + AH2 = A + 2 H2O. In terms of biological role, monomeric heme protein which primary function is to store oxygen and facilitate its diffusion within muscle tissues. Reversibly binds oxygen through a pentacoordinated heme iron and enables its timely and efficient release as needed during periods of heightened demand. Depending on the oxidative conditions of tissues and cells, and in addition to its ability to bind oxygen, it also has a nitrite reductase activity whereby it regulates the production of bioactive nitric oxide. Under stress conditions, like hypoxia and anoxia, it also protects cells against reactive oxygen species thanks to its pseudoperoxidase activity. The protein is Myoglobin (MB) of Orycteropus afer (Aardvark).